The sequence spans 607 residues: Phosphomethylpyrimidine synthase (607 aa).

Substrate-binding positions include Asn216, Met245, Tyr274, His310, 330 to 332 (SRG), 371 to 374 (DGLR), and Glu410. A Zn(2+)-binding site is contributed by His414. Position 437 (Tyr437) interacts with substrate. His478 is a Zn(2+) binding site. Residues Cys558, Cys561, and Cys566 each coordinate [4Fe-4S] cluster.

Belongs to the ThiC family. In terms of assembly, homodimer. It depends on [4Fe-4S] cluster as a cofactor.

The enzyme catalyses 5-amino-1-(5-phospho-beta-D-ribosyl)imidazole + S-adenosyl-L-methionine = 4-amino-2-methyl-5-(phosphooxymethyl)pyrimidine + CO + 5'-deoxyadenosine + formate + L-methionine + 3 H(+). Its pathway is cofactor biosynthesis; thiamine diphosphate biosynthesis. Catalyzes the synthesis of the hydroxymethylpyrimidine phosphate (HMP-P) moiety of thiamine from aminoimidazole ribotide (AIR) in a radical S-adenosyl-L-methionine (SAM)-dependent reaction. In Agrobacterium fabrum (strain C58 / ATCC 33970) (Agrobacterium tumefaciens (strain C58)), this protein is Phosphomethylpyrimidine synthase.